The sequence spans 208 residues: ATP-dependent Clp protease proteolytic subunit (208 aa).

The Nucleophile role is filled by Ser-112. His-137 is an active-site residue.

Belongs to the peptidase S14 family. As to quaternary structure, fourteen ClpP subunits assemble into 2 heptameric rings which stack back to back to give a disk-like structure with a central cavity, resembling the structure of eukaryotic proteasomes.

It is found in the cytoplasm. It carries out the reaction Hydrolysis of proteins to small peptides in the presence of ATP and magnesium. alpha-casein is the usual test substrate. In the absence of ATP, only oligopeptides shorter than five residues are hydrolyzed (such as succinyl-Leu-Tyr-|-NHMec, and Leu-Tyr-Leu-|-Tyr-Trp, in which cleavage of the -Tyr-|-Leu- and -Tyr-|-Trp bonds also occurs).. In terms of biological role, cleaves peptides in various proteins in a process that requires ATP hydrolysis. Has a chymotrypsin-like activity. Plays a major role in the degradation of misfolded proteins. The chain is ATP-dependent Clp protease proteolytic subunit from Buchnera aphidicola subsp. Acyrthosiphon pisum (strain APS) (Acyrthosiphon pisum symbiotic bacterium).